A 523-amino-acid chain; its full sequence is Inosine-5'-monophosphate dehydrogenase 2 (523 aa).

CBS domains follow at residues 121-183 and 184-240; these read FINN…VQDV and MTKN…PLAS. Residues 278–280 and 328–330 each bind NAD(+); these read DSS and GMG. K(+) contacts are provided by Gly-330 and Gly-332. Ser-333 lines the IMP pocket. K(+) is bound at residue Cys-335. Cys-335 acts as the Thioimidate intermediate in catalysis. IMP-binding positions include 368 to 370, 391 to 392, and 415 to 419; these read DGG, GG, and YRGMG. The Proton acceptor role is filled by Arg-437. Gln-449 is a binding site for IMP. 3 residues coordinate K(+): Glu-508, Gly-509, and Gly-510.

This sequence belongs to the IMPDH/GMPR family. Homotetramer. Seems to be able to form heterotetramers composed from more than 1 of the 3 IMPDH gene products (IMD2-4). It depends on K(+) as a cofactor.

It is found in the cytoplasm. It catalyses the reaction IMP + NAD(+) + H2O = XMP + NADH + H(+). Its pathway is purine metabolism; XMP biosynthesis via de novo pathway; XMP from IMP: step 1/1. With respect to regulation, mycophenolic acid (MPA) is a non-competitive inhibitor that prevents formation of the closed enzyme conformation by binding to the same site as the amobile flap. In contrast, mizoribine monophosphate (MZP) is a competitive inhibitor that induces the closed conformation. MPA is a potent inhibitor of mammalian IMPDHs but a poor inhibitor of the bacterial enzymes. MZP is a more potent inhibitor of bacterial IMPDH. In terms of biological role, catalyzes the conversion of inosine 5'-phosphate (IMP) to xanthosine 5'-phosphate (XMP), the first committed and rate-limiting step in the de novo synthesis of guanine nucleotides, and therefore plays an important role in the regulation of cell growth. In contrast to the other IMPDH alleles IMD3 and IMD4, the enzymatic activity of IMD2 seems to be intrinsically drug resistant. This chain is Inosine-5'-monophosphate dehydrogenase 2, found in Saccharomyces cerevisiae (strain ATCC 204508 / S288c) (Baker's yeast).